A 322-amino-acid chain; its full sequence is Phosphatidylglycerol--prolipoprotein diacylglyceryl transferase (322 aa).

3 helical membrane-spanning segments follow: residues 23-43, 53-73, and 97-117; these read VYPI…AFFW, FFAL…LWFV, and GLSI…YIYF. Arg143 lines the a 1,2-diacyl-sn-glycero-3-phospho-(1'-sn-glycerol) pocket. 2 helical membrane-spanning segments follow: residues 191–211 and 250–270; these read PLFL…VWII and LAAM…EIWA.

This sequence belongs to the Lgt family.

The protein resides in the cell membrane. It carries out the reaction L-cysteinyl-[prolipoprotein] + a 1,2-diacyl-sn-glycero-3-phospho-(1'-sn-glycerol) = an S-1,2-diacyl-sn-glyceryl-L-cysteinyl-[prolipoprotein] + sn-glycerol 1-phosphate + H(+). It functions in the pathway protein modification; lipoprotein biosynthesis (diacylglyceryl transfer). Catalyzes the transfer of the diacylglyceryl group from phosphatidylglycerol to the sulfhydryl group of the N-terminal cysteine of a prolipoprotein, the first step in the formation of mature lipoproteins. This is Phosphatidylglycerol--prolipoprotein diacylglyceryl transferase from Mycoplasmopsis pulmonis (strain UAB CTIP) (Mycoplasma pulmonis).